Reading from the N-terminus, the 257-residue chain is NH(3)-dependent NAD(+) synthetase (257 aa).

28–35 (GISGGVDS) serves as a coordination point for ATP. Asp-34 is a binding site for Mg(2+). Arg-109 contributes to the deamido-NAD(+) binding site. Position 129 (Thr-129) interacts with ATP. Glu-134 provides a ligand contact to Mg(2+). Lys-142 and Asp-149 together coordinate deamido-NAD(+). Residues Lys-158 and Ser-180 each contribute to the ATP site. A deamido-NAD(+)-binding site is contributed by 240–241 (HK).

The protein belongs to the NAD synthetase family. In terms of assembly, homodimer.

The enzyme catalyses deamido-NAD(+) + NH4(+) + ATP = AMP + diphosphate + NAD(+) + H(+). Its pathway is cofactor biosynthesis; NAD(+) biosynthesis; NAD(+) from deamido-NAD(+) (ammonia route): step 1/1. In terms of biological role, catalyzes the ATP-dependent amidation of deamido-NAD to form NAD. Uses ammonia as a nitrogen source. The protein is NH(3)-dependent NAD(+) synthetase of Pyrococcus furiosus (strain ATCC 43587 / DSM 3638 / JCM 8422 / Vc1).